Here is a 445-residue protein sequence, read N- to C-terminus: tRNA-2-methylthio-N(6)-dimethylallyladenosine synthase (445 aa).

The MTTase N-terminal domain occupies Q2 to K117. [4Fe-4S] cluster-binding residues include C11, C47, C80, C157, C161, and C164. Residues K143 to E374 enclose the Radical SAM core domain. The region spanning K377–H441 is the TRAM domain.

This sequence belongs to the methylthiotransferase family. MiaB subfamily. Monomer. Requires [4Fe-4S] cluster as cofactor.

The protein resides in the cytoplasm. The catalysed reaction is N(6)-dimethylallyladenosine(37) in tRNA + (sulfur carrier)-SH + AH2 + 2 S-adenosyl-L-methionine = 2-methylsulfanyl-N(6)-dimethylallyladenosine(37) in tRNA + (sulfur carrier)-H + 5'-deoxyadenosine + L-methionine + A + S-adenosyl-L-homocysteine + 2 H(+). Catalyzes the methylthiolation of N6-(dimethylallyl)adenosine (i(6)A), leading to the formation of 2-methylthio-N6-(dimethylallyl)adenosine (ms(2)i(6)A) at position 37 in tRNAs that read codons beginning with uridine. This Ehrlichia ruminantium (strain Gardel) protein is tRNA-2-methylthio-N(6)-dimethylallyladenosine synthase.